Reading from the N-terminus, the 217-residue chain is Lipid A acyltransferase PagP (217 aa).

An N-terminal signal peptide occupies residues 1–24; it reads MYLKRILITLSLITLPIVPCLSYA. Catalysis depends on residues H89, D132, and S133.

The protein belongs to the lipid A palmitoyltransferase family. In terms of assembly, homodimer.

The protein resides in the cell outer membrane. The catalysed reaction is a lipid A + a 1,2-diacyl-sn-glycero-3-phosphocholine = a hepta-acyl lipid A + a 2-acyl-sn-glycero-3-phosphocholine. It catalyses the reaction a lipid IVA + a 1,2-diacyl-sn-glycero-3-phosphocholine = a lipid IVB + a 2-acyl-sn-glycero-3-phosphocholine. It carries out the reaction a lipid IIA + a 1,2-diacyl-sn-glycero-3-phosphocholine = a lipid IIB + a 2-acyl-sn-glycero-3-phosphocholine. Its function is as follows. Transfers a fatty acid residue from the sn-1 position of a phospholipid to the N-linked hydroxyfatty acid chain on the proximal unit of lipid A or its precursors. The polypeptide is Lipid A acyltransferase PagP (Pectobacterium atrosepticum (strain SCRI 1043 / ATCC BAA-672) (Erwinia carotovora subsp. atroseptica)).